A 515-amino-acid chain; its full sequence is SWI/SNF-related matrix-associated actin-dependent regulator of chromatin subfamily D member 1 (515 aa).

Positions Met-1–Met-128 are disordered. Residues Gly-14–Gly-23 are compositionally biased toward gly residues. Residues Ala-43 to Asp-167 are interaction with ESR1, NR1H4, NR3C1, PGR and SMARCA4. An asymmetric dimethylarginine mark is found at Arg-68 and Arg-88. A Glycyl lysine isopeptide (Lys-Gly) (interchain with G-Cter in SUMO2) cross-link involves residue Lys-101. A compositionally biased stretch (low complexity) spans Pro-103–Gln-117. An interaction with SMARCC1 and SMARCC2 region spans residues Ile-168–Glu-474. A necessary for GR/NR3C1-mediated remodeling and transcription from chromatin; required for GR/NR3C1 interaction with the BRG1/SMARCA4 complex in vivo region spans residues Arg-180–Thr-515. Position 203 is a phosphothreonine (Thr-203). Lys-223 carries the N6-acetyllysine modification. In terms of domain architecture, SWIB/MDM2 spans Tyr-290–Pro-367. Positions Ala-412–Phe-440 form a coiled coil.

The protein belongs to the SMARCD family. Component of the multiprotein chromatin-remodeling complexes SWI/SNF: SWI/SNF-A (BAF), SWI/SNF-B (PBAF) and related complexes. The canonical complex contains a catalytic subunit (either SMARCA4/BRG1/BAF190A or SMARCA2/BRM/BAF190B), and at least SMARCE1, ACTL6A/BAF53, SMARCC1/BAF155, SMARCC2/BAF170, and SMARCB1/SNF5/BAF47. Other subunits specific to each of the complexes may also be present permitting several possible combinations developmentally and tissue specific. Component of the BAF complex, which includes at least actin (ACTB), ARID1A/BAF250A, ARID1B/BAF250B, SMARCA2/BRM, SMARCA4/BRG1/BAF190A, ACTL6A/BAF53, ACTL6B/BAF53B, SMARCE1/BAF57, SMARCC1/BAF155, SMARCC2/BAF170, SMARCB1/SNF5/INI1, and one or more SMARCD1/BAF60A, SMARCD2/BAF60B, or SMARCD3/BAF60C. In muscle cells, the BAF complex also contains DPF3. Component of neural progenitors-specific chromatin remodeling complex (npBAF complex) composed of at least, ARID1A/BAF250A or ARID1B/BAF250B, SMARCD1/BAF60A, SMARCD3/BAF60C, SMARCA2/BRM/BAF190B, SMARCA4/BRG1/BAF190A, SMARCB1/BAF47, SMARCC1/BAF155, SMARCE1/BAF57, SMARCC2/BAF170, PHF10/BAF45A, ACTL6A/BAF53A and actin. Component of neuron-specific chromatin remodeling complex (nBAF complex) composed of at least, ARID1A/BAF250A or ARID1B/BAF250B, SMARCD1/BAF60A, SMARCD3/BAF60C, SMARCA2/BRM/BAF190B, SMARCA4/BRG1/BAF190A, SMARCB1/BAF47, SMARCC1/BAF155, SMARCE1/BAF57, SMARCC2/BAF170, DPF1/BAF45B, DPF3/BAF45C, ACTL6B/BAF53B and actin. Component of the SWI/SNF-B (PBAF) chromatin remodeling complex, at least composed of SMARCA4/BRG1, SMARCB1/BAF47/SNF5, ACTL6A/BAF53A or ACTL6B/BAF53B, SMARCE1/BAF57, SMARCD1/BAF60A, SMARCD2/BAF60B, perhaps SMARCD3/BAF60C, SMARCC1/BAF155, SMARCC2/BAF170, PBRM1/BAF180, ARID2/BAF200 and actin (ACTB). Component of SWI/SNF (GBAF) subcomplex, which includes at least BICRA or BICRAL (mutually exclusive), BRD9, SS18, SMARCA2/BRM, SMARCA4/BRG1/BAF190A, ACTL6A/BAF53, SMARCC1/BAF155, and SMARCD1/BAF60A. Specifically interacts with the VDR heterodimer complex. Interacts with ESR1, NR3C1, NR1H4, PGR, SMARCA4, SMARCC1 and SMARCC2. Interacts with DPF2. Interacts with FOS, FOSB, FOSL1 and FOSL2.

It is found in the nucleus. Its function is as follows. Involved in transcriptional activation and repression of select genes by chromatin remodeling (alteration of DNA-nucleosome topology). Component of SWI/SNF chromatin remodeling complexes that carry out key enzymatic activities, changing chromatin structure by altering DNA-histone contacts within a nucleosome in an ATP-dependent manner. Belongs to the neural progenitors-specific chromatin remodeling complex (npBAF complex) and the neuron-specific chromatin remodeling complex (nBAF complex). During neural development a switch from a stem/progenitor to a postmitotic chromatin remodeling mechanism occurs as neurons exit the cell cycle and become committed to their adult state. The transition from proliferating neural stem/progenitor cells to postmitotic neurons requires a switch in subunit composition of the npBAF and nBAF complexes. As neural progenitors exit mitosis and differentiate into neurons, npBAF complexes which contain ACTL6A/BAF53A and PHF10/BAF45A, are exchanged for homologous alternative ACTL6B/BAF53B and DPF1/BAF45B or DPF3/BAF45C subunits in neuron-specific complexes (nBAF). The npBAF complex is essential for the self-renewal/proliferative capacity of the multipotent neural stem cells. The nBAF complex along with CREST plays a role regulating the activity of genes essential for dendrite growth. Has a strong influence on vitamin D-mediated transcriptional activity from an enhancer vitamin D receptor element (VDRE). May be a link between mammalian SWI-SNF-like chromatin remodeling complexes and the vitamin D receptor (VDR) heterodimer. Mediates critical interactions between nuclear receptors and the BRG1/SMARCA4 chromatin-remodeling complex for transactivation. Interacts with AKIRIN2. This is SWI/SNF-related matrix-associated actin-dependent regulator of chromatin subfamily D member 1 (SMARCD1) from Bos taurus (Bovine).